A 90-amino-acid chain; its full sequence is Probable Fe(2+)-trafficking protein (90 aa).

The protein belongs to the Fe(2+)-trafficking protein family. In terms of assembly, monomer.

Could be a mediator in iron transactions between iron acquisition and iron-requiring processes, such as synthesis and/or repair of Fe-S clusters in biosynthetic enzymes. This chain is Probable Fe(2+)-trafficking protein, found in Enterobacter sp. (strain 638).